A 115-amino-acid chain; its full sequence is Insulin (115 aa).

The N-terminal stretch at Met-1–Thr-26 is a signal peptide. 3 disulfides stabilise this stretch: Cys-33/Cys-101, Cys-45/Cys-114, and Cys-100/Cys-105. Residues Asp-60–Ser-92 constitute a propeptide, c peptide.

It belongs to the insulin family. As to quaternary structure, heterodimer of a B chain and an A chain linked by two disulfide bonds.

Its subcellular location is the secreted. In terms of biological role, insulin decreases blood glucose concentration. It increases cell permeability to monosaccharides, amino acids and fatty acids. It accelerates glycolysis, the pentose phosphate cycle, and glycogen synthesis in liver. The polypeptide is Insulin (ins) (Myxine glutinosa (Atlantic hagfish)).